Reading from the N-terminus, the 337-residue chain is MVKIVVRIATYASHSALQILKGAKDEGFETIAFGSERVKPLYTKYFPVADYFLVGKYPEDELLELNAVVIPTGSFVAHLGVELVERMKVPYFGNKRVLKWESDRNLERKWLEKAKLKLPRVYDDPDDIDRPVIVKPHGAKGGRGYFIAKDPQDFWTKVEKFLGIKDKEDLKNVQIQEYVIGVPVYPHYFYSKLTRELELMSIDRRYESNVDAIGRIPSKDQLELELDITYTVIGNIPLVLRESLLMDVIEAGERTVKAAEELMGGLWGPFCLEGVFTPDLDFVVFEISARIVAGTNPFINGSPYTWLKYDEPMSTGRRIAREIRLAIEEDKLDEVVS.

Residues H14 and S74 each contribute to the 5-amino-1-(5-phospho-beta-D-ribosyl)imidazole-4-carboxamide site. Positions 81 to 328 (VELVERMKVP…IAREIRLAIE (248 aa)) constitute an ATP-grasp domain. Residues 125–185 (PDDI…VPVY) and E207 contribute to the ATP site. N235 serves as a coordination point for 5-amino-1-(5-phospho-beta-D-ribosyl)imidazole-4-carboxamide. Mg(2+) contacts are provided by E273 and E286.

The protein belongs to the phosphohexose mutase family. Mg(2+) is required as a cofactor. The cofactor is Mn(2+).

It catalyses the reaction 5-amino-1-(5-phospho-beta-D-ribosyl)imidazole-4-carboxamide + formate + ATP = 5-formamido-1-(5-phospho-D-ribosyl)imidazole-4-carboxamide + ADP + phosphate. It functions in the pathway purine metabolism; IMP biosynthesis via de novo pathway; 5-formamido-1-(5-phospho-D-ribosyl)imidazole-4-carboxamide from 5-amino-1-(5-phospho-D-ribosyl)imidazole-4-carboxamide (formate route): step 1/1. Functionally, catalyzes the ATP- and formate-dependent formylation of 5-aminoimidazole-4-carboxamide-1-beta-d-ribofuranosyl 5'-monophosphate (AICAR) to 5-formaminoimidazole-4-carboxamide-1-beta-d-ribofuranosyl 5'-monophosphate (FAICAR) in the absence of folates. This is 5-formaminoimidazole-4-carboxamide-1-(beta)-D-ribofuranosyl 5'-monophosphate synthetase from Pyrococcus abyssi (strain GE5 / Orsay).